The chain runs to 231 residues: GrpE protein homolog, mitochondrial (231 aa).

Residues 49–71 are disordered; that stretch reads SEKAGEKAEEKAEEQNLSAEEQK.

It belongs to the GrpE family. In terms of assembly, component of the PAM complex, at least composed of mtHsp70, MGE1, TIM44, PAM16, PAM17 and PAM18.

Its subcellular location is the mitochondrion matrix. Its function is as follows. Essential component of the PAM complex, a complex required for the translocation of transit peptide-containing proteins from the inner membrane into the mitochondrial matrix in an ATP-dependent manner. Seems to control the nucleotide-dependent binding of SSC1 to substrate proteins. The protein is GrpE protein homolog, mitochondrial (mge1) of Candida glabrata (strain ATCC 2001 / BCRC 20586 / JCM 3761 / NBRC 0622 / NRRL Y-65 / CBS 138) (Yeast).